The following is a 73-amino-acid chain: Salivary thrombin inhibitor XC-42 (73 aa).

The signal sequence occupies residues 1–23 (MKLQFLFIFIAFCVMLFAQIATA).

As to quaternary structure, interacts with human F2 (thrombin). In terms of tissue distribution, salivary gland (at protein level).

The protein localises to the secreted. In terms of biological role, acts as a competitive inhibitor of host thrombin. The sequence is that of Salivary thrombin inhibitor XC-42 from Xenopsylla cheopis (Oriental rat flea).